Here is a 355-residue protein sequence, read N- to C-terminus: MSVLGELDLLGPRAHGAACGEAVLKAVAEDFQVDEVLDIPLSGEGEHLWLWVEKRGLNTEEAARRLGRAAGVQQKNVSYAGLKDRQALTRQWFSLHLPGKADPDLGAAEGADLRILRRTRHSRKLQRGAHAANGFTLRLTGLRAERALLDARLERIAADGVPNYFGLQRFGHGGGNLVDARSCAEQDLLPANRNLRSRFLSAGRSYLFNRLLAERVAEGSWNRAAVGDLLAFTDSRSFFLAGEEECRDARLAALDLHPTGPLWGEGDPPSGAGVLDRELALAGSEPALCRWLAKAGMAHERRILRLPIQGLAWHYPEPDVLQLEFVLPAGCFATVVVREILDLVPTGQTENPCAY.

Residue aspartate 84 is the Nucleophile of the active site. The 147-residue stretch at 160–306 (GVPNYFGLQR…MAHERRILRL (147 aa)) folds into the TRUD domain.

Belongs to the pseudouridine synthase TruD family.

It catalyses the reaction uridine(13) in tRNA = pseudouridine(13) in tRNA. In terms of biological role, responsible for synthesis of pseudouridine from uracil-13 in transfer RNAs. The polypeptide is tRNA pseudouridine synthase D (Pseudomonas aeruginosa (strain UCBPP-PA14)).